The chain runs to 474 residues: Cysteine--tRNA ligase (474 aa).

Residue C29 participates in Zn(2+) binding. A 'HIGH' region motif is present at residues 31-41; it reads ATVQGEPHVGH. Zn(2+) is bound by residues C211, H236, and E240. Positions 267–271 match the 'KMSKS' region motif; that stretch reads KMSKS. K270 provides a ligand contact to ATP.

Belongs to the class-I aminoacyl-tRNA synthetase family. As to quaternary structure, monomer. The cofactor is Zn(2+).

It is found in the cytoplasm. It catalyses the reaction tRNA(Cys) + L-cysteine + ATP = L-cysteinyl-tRNA(Cys) + AMP + diphosphate. The chain is Cysteine--tRNA ligase from Beutenbergia cavernae (strain ATCC BAA-8 / DSM 12333 / CCUG 43141 / JCM 11478 / NBRC 16432 / NCIMB 13614 / HKI 0122).